The sequence spans 409 residues: tRNA (guanine-N(7)-)-methyltransferase non-catalytic subunit wuho (409 aa).

The disordered stretch occupies residues aspartate 48 to alanine 72. Over residues threonine 58–alanine 72 the composition is skewed to polar residues. WD repeat units lie at residues alanine 72 to asparagine 111, methionine 122 to proline 161, glycine 167 to threonine 206, and glycine 210 to arginine 252.

The protein belongs to the WD repeat TRM82 family. In terms of assembly, forms a heterodimer with the catalytic subunit.

The protein resides in the nucleus. The protein operates within tRNA modification; N(7)-methylguanine-tRNA biosynthesis. Its function is as follows. Required for the formation of N(7)-methylguanine at position 46 (m7G46) in tRNA. In the complex, it is required to stabilize and induce conformational changes of the catalytic subunit. This is tRNA (guanine-N(7)-)-methyltransferase non-catalytic subunit wuho from Aedes aegypti (Yellowfever mosquito).